Here is a 245-residue protein sequence, read N- to C-terminus: 8-amino-3,8-dideoxy-manno-octulosonate cytidylyltransferase (245 aa).

It belongs to the KdsB family.

Its subcellular location is the cytoplasm. The catalysed reaction is 8-amino-3,8-dideoxy-alpha-D-manno-octulosonate + CTP = CMP-8-amino-3,8-dideoxy-alpha-D-manno-oct-2-ulosonate + diphosphate. It functions in the pathway bacterial outer membrane biogenesis; lipopolysaccharide biosynthesis. Activates KDO8N (a required 8-carbon sugar) for incorporation into bacterial lipopolysaccharide in the Shewanella genus. This is 8-amino-3,8-dideoxy-manno-octulosonate cytidylyltransferase from Shewanella putrefaciens (strain CN-32 / ATCC BAA-453).